A 193-amino-acid polypeptide reads, in one-letter code: Acyl carrier protein phosphodiesterase (193 aa).

The protein belongs to the AcpH family.

The enzyme catalyses holo-[ACP] + H2O = apo-[ACP] + (R)-4'-phosphopantetheine + H(+). Converts holo-ACP to apo-ACP by hydrolytic cleavage of the phosphopantetheine prosthetic group from ACP. The protein is Acyl carrier protein phosphodiesterase of Salmonella choleraesuis (strain SC-B67).